We begin with the raw amino-acid sequence, 421 residues long: Core protease I7 homolog (421 aa).

Catalysis depends on residues H242, D249, and C329.

Belongs to the peptidase C57 family.

It is found in the virion. In terms of biological role, late protein responsible for processing most or all of the viral core and membrane proteins known to undergo morphogenesis-associated proteolysis. These proteolytic events are involved in the transformation of immature virions (IV) into mature virions (MV). This chain is Core protease I7 homolog, found in Fowlpox virus (strain NVSL) (FPV).